Consider the following 359-residue polypeptide: Cytohesin-interacting protein (359 aa).

Positions 77–166 (VVTVEKQDNG…LLTIETLNGT (90 aa)) constitute a PDZ domain. Positions 165–188 (GTMIHRRAELEAKLQTLKQTLKKK) form a coiled coil. The interaction with CYTH1 stretch occupies residues 166–188 (TMIHRRAELEAKLQTLKQTLKKK).

Interacts with CYTH1 and SNX27.

Its subcellular location is the cytoplasm. It is found in the early endosome. By its binding to cytohesin-1 (CYTH1), it modifies activation of ARFs by CYTH1 and its precise function may be to sequester CYTH1 in the cytoplasm. This is Cytohesin-interacting protein (Cytip) from Mus musculus (Mouse).